A 66-amino-acid chain; its full sequence is Large ribosomal subunit protein bL33c (66 aa).

This sequence belongs to the bacterial ribosomal protein bL33 family.

Its subcellular location is the plastid. It localises to the chloroplast. The sequence is that of Large ribosomal subunit protein bL33c from Coffea arabica (Arabian coffee).